Reading from the N-terminus, the 35-residue chain is Dermonecrotic toxin LgSicTox-beta-LOXN4 (35 aa).

A Mg(2+)-binding site is contributed by Asp20.

The protein belongs to the arthropod phospholipase D family. Class II subfamily. It depends on Mg(2+) as a cofactor. Contains 2 disulfide bonds. Expressed by the venom gland.

The protein resides in the secreted. The catalysed reaction is an N-(acyl)-sphingosylphosphocholine = an N-(acyl)-sphingosyl-1,3-cyclic phosphate + choline. It catalyses the reaction an N-(acyl)-sphingosylphosphoethanolamine = an N-(acyl)-sphingosyl-1,3-cyclic phosphate + ethanolamine. The enzyme catalyses a 1-acyl-sn-glycero-3-phosphocholine = a 1-acyl-sn-glycero-2,3-cyclic phosphate + choline. It carries out the reaction a 1-acyl-sn-glycero-3-phosphoethanolamine = a 1-acyl-sn-glycero-2,3-cyclic phosphate + ethanolamine. In terms of biological role, dermonecrotic toxins cleave the phosphodiester linkage between the phosphate and headgroup of certain phospholipids (sphingolipid and lysolipid substrates), forming an alcohol (often choline) and a cyclic phosphate. This toxin acts on sphingomyelin (SM). It may also act on ceramide phosphoethanolamine (CPE), lysophosphatidylcholine (LPC) and lysophosphatidylethanolamine (LPE), but not on lysophosphatidylserine (LPS), and lysophosphatidylglycerol (LPG). It acts by transphosphatidylation, releasing exclusively cyclic phosphate products as second products. Induces dermonecrosis, hemolysis, increased vascular permeability, edema, inflammatory response, and platelet aggregation. The chain is Dermonecrotic toxin LgSicTox-beta-LOXN4 from Loxosceles gaucho (Spider).